The primary structure comprises 148 residues: Calmodulin (148 aa).

Ala-2 is subject to N-acetylalanine. 4 consecutive EF-hand domains span residues 8-43 (DQISEFKEAFSLFDKDGDGCITTKELGTVMRSLGQN), 44-79 (PTEAELQDMINEVDRDGNGTIDFPEFLNLMARKMKD), 81-116 (DSEEELKEAFRVFDKDQNGFISAAELRHVMTNLGEK), and 116-148 (KLTDEVDEMIREADVDGDGQINYEEFVKVMMAK). 14 residues coordinate Ca(2+): Asp-21, Asp-23, Asp-25, Cys-27, Glu-32, Asp-57, Asp-59, Asn-61, Thr-63, Glu-68, Asp-94, Asp-96, Asn-98, and Glu-105. Residue Lys-116 is modified to N6,N6,N6-trimethyllysine. Residues Asp-129, Asp-131, Asp-133, Gln-135, and Glu-140 each contribute to the Ca(2+) site.

The protein belongs to the calmodulin family.

Calmodulin mediates the control of a large number of enzymes, ion channels and other proteins by Ca(2+). Among the enzymes to be stimulated by the calmodulin-Ca(2+) complex are a number of protein kinases and phosphatases. The polypeptide is Calmodulin (CAMF1) (Fagus sylvatica (Beechnut)).